The following is a 461-amino-acid chain: MPPSKARRKRSLRDITATVATGTVANSKPGSSSTNEGKQQDKKKEGPQEPDIPPLPPVVVNIVPRQGLGCEVVEGLLVPSRKREYKPNSKYTVGNHPIYAIGFNFIDMRYYDVFAIASCNSVIIYRCLENGGFGLLQNYVDEDKDESFYTLSWTIDQVDSSPLLVAAGSNRIIRVINCATEKLDKSLVGHGGSIHEIRTHASKPSLIISASKDESIRLWNVHTGICILVFAGAGGHRHDVLSVDFHPTEVGIFASCGMDNTVKIWSMKEFWIYVEKSYSWTGHPSKFPTRNIQFPVLTAAVHSDYVDCTRWLGDFILSKSVKNAVLLWEPKPDKRRPGEGSVDVLQKYPVPKCSLWFMKFSCDFYSNQMAIGNNKGEIYVWEVQSSPPVLIDRLCNQECKSPIRQTAVSFDGSTILGAADDGAIWRWDEVDPAASSSKPDQAAAPAAGVGAGAGADADADA.

Residues methionine 1 to serine 11 are compositionally biased toward basic residues. Positions methionine 1–proline 56 are disordered. Polar residues predominate over residues threonine 18–glycine 37. The span at lysine 38–proline 47 shows a compositional bias: basic and acidic residues. WD repeat units lie at residues aspartate 143–serine 186, glycine 189–valine 229, glycine 235–glutamate 275, valine 301–glycine 338, proline 351–isoleucine 391, and glutamate 398–serine 437. A disordered region spans residues glutamate 429 to alanine 461. Residues proline 432–glycine 448 show a composition bias toward low complexity.

The protein belongs to the WD repeat ESC family. In terms of tissue distribution, specifically expressed in kernel starting from 6 days after pollination.

It is found in the nucleus. Polycomb group (PcG) protein. PcG proteins act by forming multiprotein complexes, which are required to maintain the transcriptionally repressive state of homeotic genes throughout development. PcG proteins are not required to initiate repression, but to maintain it during later stages of development. They probably act via the methylation of histones, rendering chromatin heritably changed in its expressibility. This chain is Polycomb group protein FIE1 (FIE1), found in Zea mays (Maize).